Consider the following 132-residue polypeptide: Homeobox protein HD-4 (132 aa).

The homeobox DNA-binding region spans 29 to 88 (GLSGYRYKTHIQVYVLTKIFEITQYPSHDTRQNLAILLNMSPRTIQIWFQNSRSVSRGAA). Residues 82–101 (SVSRGAAKKKVSKDNGPQEA) form a disordered region.

Its subcellular location is the nucleus. The chain is Homeobox protein HD-4 (HD-4) from Encephalitozoon cuniculi (strain GB-M1) (Microsporidian parasite).